A 602-amino-acid polypeptide reads, in one-letter code: MKEYKIENIRNFSIIAHIDHGKSTIADRLLESTSTVEEREMREQLLDSMDLERERGITIKAHPVTMTYLYEGEVYQLNLIDTPGHVDFSYEVSRSLSACEGALLIVDAAQGVQAQSLANVYLALERDLEIIPVLNKIDLPAADPVRIAQQIEDYIGLDTTNIIACSAKTGQGIPAILKAIIDLVPPPKAPAETELKALVFDSHYDPYVGIMVYVRIISGELKKGDRITFMAAKGSSFEVLGIGAFLPKATFIEGSLRPGQVGFFIANLKKVKDVKIGDTVTKTKHPAKTPLEGFKEINPVVFAGIYPIDSSDFDTLKDALGRLQLNDSALTIEQESSHSLGFGFRCGFLGLLHLEIIFERIIREFDLDIIATAPSVIYKVVLKNGKVLDIDNPSGYPDPAIIEHVEEPWVHVNIITPQEYLSNIMNLCLDKRGICVKTEMLDQHRLVLAYELPLNEIVSDFNDKLKSVTKGYGSFDYRLGDYRKGSIIKLEVLINEEPIDAFSCLVHRDKAESRGRSICEKLVDVIPQQLFKIPIQAAINKKVIARETIRALSKNVTAKCYGGDITRKRKLWEKQKKGKKRMKEFGKVSIPNTAFIEVLKLD.

Residues 7–188 (ENIRNFSIIA…AIIDLVPPPK (182 aa)) enclose the tr-type G domain. GTP-binding positions include 19–24 (DHGKST) and 135–138 (NKID).

It belongs to the TRAFAC class translation factor GTPase superfamily. Classic translation factor GTPase family. LepA subfamily.

The protein resides in the cell inner membrane. It catalyses the reaction GTP + H2O = GDP + phosphate + H(+). In terms of biological role, required for accurate and efficient protein synthesis under certain stress conditions. May act as a fidelity factor of the translation reaction, by catalyzing a one-codon backward translocation of tRNAs on improperly translocated ribosomes. Back-translocation proceeds from a post-translocation (POST) complex to a pre-translocation (PRE) complex, thus giving elongation factor G a second chance to translocate the tRNAs correctly. Binds to ribosomes in a GTP-dependent manner. The chain is Elongation factor 4 from Chlamydia pneumoniae (Chlamydophila pneumoniae).